We begin with the raw amino-acid sequence, 542 residues long: MSPTELIREIEKRRTFAIISHPDAGKTTLTEKLLLFGGAIQLAGTVKSRKASRHATSDWMELEKQRGISVTSSVMQFPYKDRIINLLDTPGHADFSEDTYRTLTAVDSALMVIDSAKGVEERTIKLMEVCRLRNTPILTFINKLDREGQEPIELLDEIERVLGIRCAPLTWPIGMGKRFKGIFHLSHNRIHLFSPTHGGKIKTGEQIQGLDNPRLSELLGNQVEELQEEIALVQGASHPFDKEAFLAGEQTPVFFGSAMNNFGVEELLDAYVEYAPSPRARETATRRVAPKELKFSGFVFKIQANMDPQHRDRIAFLRVCSGSYQKGMKLRHTRLGREVQIANVLTFMAGEREQAETAWPGDIIGFHNHGTIQIGDTFTQGEELQFTGIPHFAPELFRRVRLKDPLRTKALLKGLQQLSEEGATQLFRPLLGNDLILGAVGVLQFDVVAHRLKHEYSVDCGYDSVQVVTARWVSCNDSRRLEEFRTKAAAHLALDGAGNLTYLAPTRVNLDLTMERWPEVAFHAIREHALGVEDGNPLVASL.

A tr-type G domain is found at 11–279 (EKRRTFAIIS…AYVEYAPSPR (269 aa)). Residues 20 to 27 (SHPDAGKT), 88 to 92 (DTPGH), and 142 to 145 (NKLD) each bind GTP.

The protein belongs to the TRAFAC class translation factor GTPase superfamily. Classic translation factor GTPase family. PrfC subfamily.

The protein resides in the cytoplasm. Functionally, increases the formation of ribosomal termination complexes and stimulates activities of RF-1 and RF-2. It binds guanine nucleotides and has strong preference for UGA stop codons. It may interact directly with the ribosome. The stimulation of RF-1 and RF-2 is significantly reduced by GTP and GDP, but not by GMP. The protein is Peptide chain release factor 3 of Nitrosococcus oceani (strain ATCC 19707 / BCRC 17464 / JCM 30415 / NCIMB 11848 / C-107).